Consider the following 1288-residue polypeptide: Contactin-associated protein-like 3B (1288 aa).

Positions 1-25 (MASVAWAVLKVLLLLPTQTWSPVGA) are cleaved as a signal peptide. The tract at residues 23–61 (VGAGNPPDCDSPLASALPRSSFSSSSELSSSHGPGFSRL) is disordered. Topologically, residues 26–1245 (GNPPDCDSPL…LVNADRRDSA (1220 aa)) are extracellular. The region spanning 31 to 177 (CDSPLASALP…IGMRIEVYGC (147 aa)) is the F5/8 type C domain. 6 cysteine pairs are disulfide-bonded: Cys-31–Cys-177, Cys-332–Cys-364, Cys-513–Cys-545, Cys-551–Cys-562, Cys-556–Cys-571, and Cys-573–Cys-583. Positions 33–59 (SPLASALPRSSFSSSSELSSSHGPGFS) are enriched in low complexity. Laminin G-like domains follow at residues 183-364 (VVYF…SFSC) and 370-545 (VPVT…IDSC). Asn-359 carries an N-linked (GlcNAc...) asparagine glycan. The 38-residue stretch at 547–584 (ITDRCLPSYCEHGGECSQSWDTFSCDCLGTGYTGETCH) folds into the EGF-like 1 domain. Residues 585-792 (SSLYEQSCEA…LLCRGDKSFW (208 aa)) form the Fibrinogen C-terminal domain. Residue Asn-706 is glycosylated (N-linked (GlcNAc...) asparagine). One can recognise a Laminin G-like 3 domain in the interval 793 to 958 (NSASFNTETS…TVTPGVEPGC (166 aa)). Cystine bridges form between Cys-931–Cys-958, Cys-962–Cys-975, Cys-969–Cys-984, Cys-986–Cys-996, and Cys-1167–Cys-1203. An EGF-like 2 domain is found at 959 to 997 (AGHCSTYGHLCRNGGRCREKRRGVTCDCAFSAYDGPFCS). A Laminin G-like 4 domain is found at 1016 to 1203 (EHYTLSENSS…RGHVAPMARC (188 aa)). A disordered region spans residues 1215–1236 (ELAPRLAGGAGRSGPVDEGEPL). The helical transmembrane segment at 1246–1266 (VIGGVIAVEIFILLCITAIAI) threads the bilayer. Topologically, residues 1267 to 1288 (RIYQQRKLRKENESKVSKKEEC) are cytoplasmic.

It belongs to the neurexin family.

It localises to the membrane. This chain is Contactin-associated protein-like 3B (CNTNAP3B), found in Homo sapiens (Human).